The following is a 443-amino-acid chain: Transcriptional adapter 2-alpha (443 aa).

Serine 6 carries the post-translational modification Phosphoserine. The segment at 12–69 adopts a ZZ-type zinc-finger fold; that stretch reads SDKPPCRGCSSYLTEPYIKCAECGPPPFFLCLQCFTRGFEYKKHQSDHTYEIMTSDFP. Cysteine 17, cysteine 20, cysteine 31, cysteine 34, cysteine 42, cysteine 45, histidine 55, and histidine 59 together coordinate Zn(2+). An SANT domain is found at 70–122; the sequence is VLDPSWTAQEEMALLEAVMDCGFGNWQDVANQMCTKTKEECEKHYMKHFINNP. Residues lysine 132 and lysine 138 each participate in a glycyl lysine isopeptide (Lys-Gly) (interchain with G-Cter in SUMO2) cross-link. The region spanning 356–443 is the SWIRM domain; it reads NSGRRSAPPL…LIREGYITKA (88 aa). A DNA-binding region spans residues 426-435; that stretch reads KTRKIYDFLI.

As to quaternary structure, interacts with GCN5. Interacts with NR3C1. Associated with the P/CAF protein in the PCAF complex. Component of the PCAF complex, at least composed of TADA2L/ADA2, TADA3L/ADA3, TAF5L/PAF65-beta, TAF6L/PAF65-alpha, TAF10/TAFII30, TAF12/TAFII20, TAF9/TAFII31 and TRRAP. Component of the ADA2A-containing complex (ATAC), composed of KAT14, KAT2A, TADA2L, TADA3L, ZZ3, MBIP, WDR5, YEATS2, CCDC101 and DR1. Interacts with CCDC134.

Its subcellular location is the nucleus. The protein localises to the chromosome. Component of the ATAC complex, a complex with histone acetyltransferase activity on histones H3 and H4. Required for the function of some acidic activation domains, which activate transcription from a distant site. Binds double-stranded DNA. Binds dinucleosomes, probably at the linker region between neighboring nucleosomes. Plays a role in chromatin remodeling. May promote TP53/p53 'Lys-321' acetylation, leading to reduced TP53 stability and transcriptional activity. May also promote XRCC6 acetylation thus facilitating cell apoptosis in response to DNA damage. The sequence is that of Transcriptional adapter 2-alpha (Tada2a) from Mus musculus (Mouse).